An 88-amino-acid chain; its full sequence is Small ribosomal subunit protein uS17 (88 aa).

This sequence belongs to the universal ribosomal protein uS17 family. As to quaternary structure, part of the 30S ribosomal subunit.

Its function is as follows. One of the primary rRNA binding proteins, it binds specifically to the 5'-end of 16S ribosomal RNA. This is Small ribosomal subunit protein uS17 from Synechococcus sp. (strain WH7803).